Consider the following 193-residue polypeptide: CASP-like protein 1D1 (193 aa).

A disordered region spans residues Met-1–Lys-24. Over Met-1–Gln-30 the chain is Cytoplasmic. A compositionally biased stretch (polar residues) spans Ser-14–Lys-24. A helical transmembrane segment spans residues Val-31–Ser-51. Topologically, residues Lys-52–Ala-76 are extracellular. A helical transmembrane segment spans residues Leu-77–Val-97. The Cytoplasmic segment spans residues Thr-98–Ser-108. The helical transmembrane segment at Ala-109 to Ala-129 threads the bilayer. Residues Thr-130–His-162 lie on the Extracellular side of the membrane. Residues Val-163 to Ile-183 form a helical membrane-spanning segment. Over Ser-184–Arg-193 the chain is Cytoplasmic.

The protein belongs to the Casparian strip membrane proteins (CASP) family. Homodimer and heterodimers.

Its subcellular location is the cell membrane. This chain is CASP-like protein 1D1, found in Arabidopsis thaliana (Mouse-ear cress).